The chain runs to 296 residues: Circadian clock oscillator protein KaiA (296 aa).

A psR domain, binds oxidized quinones region spans residues 2 to 133 (ARPGLTIALL…LRQGRADGRS (132 aa)). In terms of domain architecture, KaiA N-terminal spans 2–152 (ARPGLTIALL…KLSRRLQERL (151 aa)). The interval 153 to 161 (GYLGVFYKR) is flexible linker. In terms of domain architecture, KaiA C-terminal spans 162-270 (DPSRFLGSLP…CEMYRRSIPP (109 aa)).

In terms of assembly, homodimer. The KaiABC complex composition changes during the circadian cycle to control KaiC phosphorylation. Complexes KaiC(6), KaiA(2-4):KaiC(6), KaiB(6):KaiC(6) and KaiC(6):KaiB(6):KaiA(12) are among the most important forms, many form cooperatively. KaiA and CikA bind to the same region of the KaiB(fs) form and therefore compete.

Functionally, key component of the KaiABC oscillator complex, which constitutes the main circadian regulator in cyanobacteria. Complex composition changes during the circadian cycle to control KaiC phosphorylation. KaiA stimulates KaiC autophosphorylation, while KaiB sequesters KaiA, leading to KaiC autodephosphorylation. KaiA binding to the KaiC CII domain during the subjective day yields KaiA(2-4):KaiC(6) complexes which stimulate KaiC autophosphorylation. Phospho-Ser-431 KaiC accumulation triggers binding of KaiB during the subjective night to form the KaiB(6):KaiC(6) complex, leading to changes in the output regulators CikA and SasA. KaiB(6):KaiC(6) formation exposes a site for KaiA binding on KaiB that sequesters KaiA from KaiC's CII domain, making the KaiC(6):KaiB(6):KaiA(12) complex resulting in KaiC autodephosphorylation. Complete dephosphorylation of KaiC leads to dissociation of KaiA(2):KaiB(1), completing 1 cycle of the Kai oscillator. Binds oxidized quinones via the N-terminal PsR domain, allowing it to sense redox changes and possibly mediate clock input. This Parasynechococcus marenigrum (strain WH8102) protein is Circadian clock oscillator protein KaiA.